A 364-amino-acid polypeptide reads, in one-letter code: MKLNKIYLQSFRNLQETMLMPAQHFNIFYGNNGQGKTNLLESIFIMATMKSFKTARSSDLVRWGAISSLLKGWVERDGVTREIAVFLDNQGKKIRVDQKAVTRIDDFFGHLNVVVFTPEEVNMVKGLPELRRKYLDRAVFSSDITYLSVYHAYSKILKNRNMLLKRGEKASFDIWTEKLVEQGKNIILSRLAYLDALRDLLKRFYREISGNEEAVDISYRPYHMDLADCRGDVADAFAEALAKTATEEERRGTTLAGPHRDDVEFILNGRPLKQFGSQGQQKSYVLALKMAETEYLQKKFHSQPIFLLDDLSSELDQERKKNLMEFLKKRDMQVFITTTSLQNINVDEIENYRTYRIEEGKVLH.

30 to 37 (GNNGQGKT) contacts ATP.

This sequence belongs to the RecF family.

The protein localises to the cytoplasm. In terms of biological role, the RecF protein is involved in DNA metabolism; it is required for DNA replication and normal SOS inducibility. RecF binds preferentially to single-stranded, linear DNA. It also seems to bind ATP. The polypeptide is DNA replication and repair protein RecF (Geotalea daltonii (strain DSM 22248 / JCM 15807 / FRC-32) (Geobacter daltonii)).